The following is a 58-amino-acid chain: Small ribosomal subunit protein bS21 (58 aa).

Over residues 31 to 42 (EIRKREHYEKPS) the composition is skewed to basic and acidic residues. A disordered region spans residues 31-58 (EIRKREHYEKPSVKRKKKSEAARKRKYN). Basic residues predominate over residues 43–58 (VKRKKKSEAARKRKYN).

The protein belongs to the bacterial ribosomal protein bS21 family.

In Agathobacter rectalis (strain ATCC 33656 / DSM 3377 / JCM 17463 / KCTC 5835 / VPI 0990) (Eubacterium rectale), this protein is Small ribosomal subunit protein bS21.